A 664-amino-acid polypeptide reads, in one-letter code: MIDFFLKSEYLPAGDQPKAIKEIENSILLGNKYQTLKGVTGSGKTFTIANIIKNLNRPALVVSHNKTLAAQLYREFKDFFPNNAVEYFVSYYDYYQPESYVPSKDLFIEKEATINSEIEIKRIRTVTSLAKRRDVIVVATVSSIYALGSPDFFKKSAREFFVGQRISIKEISDIFVELYYERTLINLERDKFSIKGDIIEIWPSSEHGEFAYRICLDFDEIVKIYRISSFSKKNLGATNSFTLFAKSYFVIPYQNVLEAIPKISYDLDLQCQYFKDNGKLVEAERLKQRVEYDLEMLRETGFCSGIENYSKYLSGSTMGRPYCLFDFFPKDYLLFVDESHVTLPQFRGMYNGDYSRKLNLVNFGFRLPAALENRPLKYDEFDALINQVVFVSATPGFEENEKSSVTVDQIIRPTGLVDPEIITRHSDGQMEDLYIEIQKRVALKERVLITTLTKKMSEDLTEYLVTLGVKAKYLHSELDTLERVEVISLLRKSEIDVIVGINLLREGLDIPEVSLVAILDADKVGFLRSATSLIQTIGRAARNSNGLVIMYYDKISVAMREAIEETNRRRQIQIDYNKKNNITPKTIVKKIQNILEKELNNKNKNISYDFEKMVSGEKLSKKKLIDKLKFELEEAVNDERFEDAIVLRDKIKELGSKISVARNK.

The Helicase ATP-binding domain maps to 25-170; that stretch reads NSILLGNKYQ…FVGQRISIKE (146 aa). Position 38–45 (38–45) interacts with ATP; it reads GVTGSGKT. The short motif at 91 to 114 is the Beta-hairpin element; it reads YYDYYQPESYVPSKDLFIEKEATI. The region spanning 429–595 is the Helicase C-terminal domain; the sequence is QMEDLYIEIQ…TIVKKIQNIL (167 aa). Residues 622–657 enclose the UVR domain; the sequence is KKLIDKLKFELEEAVNDERFEDAIVLRDKIKELGSK.

Belongs to the UvrB family. As to quaternary structure, forms a heterotetramer with UvrA during the search for lesions. Interacts with UvrC in an incision complex.

The protein localises to the cytoplasm. The UvrABC repair system catalyzes the recognition and processing of DNA lesions. A damage recognition complex composed of 2 UvrA and 2 UvrB subunits scans DNA for abnormalities. Upon binding of the UvrA(2)B(2) complex to a putative damaged site, the DNA wraps around one UvrB monomer. DNA wrap is dependent on ATP binding by UvrB and probably causes local melting of the DNA helix, facilitating insertion of UvrB beta-hairpin between the DNA strands. Then UvrB probes one DNA strand for the presence of a lesion. If a lesion is found the UvrA subunits dissociate and the UvrB-DNA preincision complex is formed. This complex is subsequently bound by UvrC and the second UvrB is released. If no lesion is found, the DNA wraps around the other UvrB subunit that will check the other stand for damage. This chain is UvrABC system protein B, found in Borreliella afzelii (strain PKo) (Borrelia afzelii).